The primary structure comprises 1102 residues: ATP-dependent DNA helicase MPH1 (1102 aa).

Residues 19–55 (ALDKPATSGLHSREQEQQRDISNATPHTSTDLELEDF) are disordered. The span at 38-49 (DISNATPHTSTD) shows a compositional bias: polar residues. A Helicase ATP-binding domain is found at 147-315 (IVKNGLFNNT…DVIDNLGVSH (169 aa)). An ATP-binding site is contributed by 160–167 (LPTGLGKT). Positions 263–266 (DEAH) match the DEAH box motif. The 162-residue stretch at 490–651 (NLLNYFMDAG…GSRFNFRHDL (162 aa)) folds into the Helicase C-terminal domain. 4 disordered regions span residues 672–702 (PIENTQDTSLPEPKARSTRGKKASKKKFNMP), 720–743 (ASKTKAKPNKSPKKAESKETDEIS), 818–837 (SQGIETRHTKPHGDTDKSRY), and 858–1102 (SGRK…SESG). A compositionally biased stretch (basic residues) spans 687 to 699 (RSTRGKKASKKKF). Positions 822–837 (ETRHTKPHGDTDKSRY) are enriched in basic and acidic residues. The segment covering 1003-1019 (SSGAASKSGSTASTAAK) has biased composition (low complexity). The segment covering 1069–1082 (SDDDDDDNDDEDDV) has biased composition (acidic residues).

The protein belongs to the DEAD box helicase family. DEAH subfamily. FANCM sub-subfamily. As to quaternary structure, interacts with the MHF histone-fold complex to form the FANCM-MHF complex.

It is found in the nucleus. It carries out the reaction ATP + H2O = ADP + phosphate + H(+). Its function is as follows. ATP-dependent DNA helicase involved in DNA damage repair by homologous recombination and in genome maintenance. Capable of unwinding D-loops. Plays a role in limiting crossover recombinants during mitotic DNA double-strand break (DSB) repair. Component of a FANCM-MHF complex which promotes gene conversion at blocked replication forks, probably by reversal of the stalled fork. The protein is ATP-dependent DNA helicase MPH1 of Pyricularia oryzae (strain 70-15 / ATCC MYA-4617 / FGSC 8958) (Rice blast fungus).